We begin with the raw amino-acid sequence, 94 residues long: Large ribosomal subunit protein bL25 (94 aa).

It belongs to the bacterial ribosomal protein bL25 family. Part of the 50S ribosomal subunit; part of the 5S rRNA/L5/L18/L25 subcomplex. Contacts the 5S rRNA. Binds to the 5S rRNA independently of L5 and L18.

This is one of the proteins that binds to the 5S RNA in the ribosome where it forms part of the central protuberance. This Proteus mirabilis (strain HI4320) protein is Large ribosomal subunit protein bL25.